The sequence spans 557 residues: Arginine--tRNA ligase (557 aa).

Residues 132–142 (ANPTGDLHLGH) carry the 'HIGH' region motif.

This sequence belongs to the class-I aminoacyl-tRNA synthetase family. As to quaternary structure, monomer.

The protein resides in the cytoplasm. It carries out the reaction tRNA(Arg) + L-arginine + ATP = L-arginyl-tRNA(Arg) + AMP + diphosphate. This is Arginine--tRNA ligase from Geobacillus kaustophilus (strain HTA426).